The sequence spans 207 residues: Thymidylate kinase (207 aa).

An ATP-binding site is contributed by 7-14; sequence GCEGTGKT.

The protein belongs to the thymidylate kinase family.

The catalysed reaction is dTMP + ATP = dTDP + ADP. Phosphorylation of dTMP to form dTDP in both de novo and salvage pathways of dTTP synthesis. The polypeptide is Thymidylate kinase (Onion yellows phytoplasma (strain OY-M)).